The sequence spans 450 residues: tRNA-2-methylthio-N(6)-dimethylallyladenosine synthase (450 aa).

The 119-residue stretch at Gly-14 to Lys-132 folds into the MTTase N-terminal domain. Residues Cys-23, Cys-59, Cys-93, Cys-169, Cys-173, and Cys-176 each contribute to the [4Fe-4S] cluster site. Positions Arg-155–Lys-385 constitute a Radical SAM core domain. A TRAM domain is found at Lys-388–Ile-450.

This sequence belongs to the methylthiotransferase family. MiaB subfamily. As to quaternary structure, monomer. It depends on [4Fe-4S] cluster as a cofactor.

It localises to the cytoplasm. The enzyme catalyses N(6)-dimethylallyladenosine(37) in tRNA + (sulfur carrier)-SH + AH2 + 2 S-adenosyl-L-methionine = 2-methylsulfanyl-N(6)-dimethylallyladenosine(37) in tRNA + (sulfur carrier)-H + 5'-deoxyadenosine + L-methionine + A + S-adenosyl-L-homocysteine + 2 H(+). In terms of biological role, catalyzes the methylthiolation of N6-(dimethylallyl)adenosine (i(6)A), leading to the formation of 2-methylthio-N6-(dimethylallyl)adenosine (ms(2)i(6)A) at position 37 in tRNAs that read codons beginning with uridine. In Clostridium botulinum (strain Langeland / NCTC 10281 / Type F), this protein is tRNA-2-methylthio-N(6)-dimethylallyladenosine synthase.